A 150-amino-acid polypeptide reads, in one-letter code: Large ribosomal subunit protein uL15 (150 aa).

The segment at 1–57 (MTIKLESLQSNKGSRRKKMRKGRGIAAGQGASCGFGMRGQKSRSGRPTRPGFEGGQM) is disordered. Basic residues predominate over residues 13 to 23 (GSRRKKMRKGR). Gly residues predominate over residues 25–37 (IAAGQGASCGFGM).

The protein belongs to the universal ribosomal protein uL15 family. As to quaternary structure, part of the 50S ribosomal subunit.

Its function is as follows. Binds to the 23S rRNA. The polypeptide is Large ribosomal subunit protein uL15 (Prochlorococcus marinus (strain NATL1A)).